Reading from the N-terminus, the 461-residue chain is Hydroxyproline dehydrogenase (461 aa).

Lys310 bears the N6-acetyllysine mark.

It belongs to the proline oxidase family. The cofactor is FAD.

The enzyme catalyses trans-4-hydroxy-L-proline + a quinone = (3R,5S)-1-pyrroline-3-hydroxy-5-carboxylate + a quinol + H(+). It carries out the reaction L-proline + a quinone = (S)-1-pyrroline-5-carboxylate + a quinol + H(+). The protein operates within amino-acid degradation; L-proline degradation into L-glutamate; L-glutamate from L-proline: step 1/2. Dehydrogenase that converts trans-4-L-hydroxyproline to delta-1-pyrroline-3-hydroxy-5-carboxylate (Hyp) using ubiquinone-10 as the terminal electron acceptor. Can also use proline as a substrate but with a very much lower efficiency. Does not react with other diastereomers of Hyp: trans-4-D-hydroxyproline and cis-4-L-hydroxyproline. Ubiquininone analogs such as menadione, duroquinone and ubiquinone-1 react more efficiently than oxygen as the terminal electron acceptor during catalysis. The protein is Hydroxyproline dehydrogenase of Bos taurus (Bovine).